The following is a 354-amino-acid chain: UDP-glucose 4-epimerase 1 (354 aa).

8-39 (TILVTGGAGYIGSHTVLQLLQLGFRVVVLDNL) serves as a coordination point for NAD(+). S133 contributes to the substrate binding site. Y157 serves as the catalytic Proton acceptor.

This sequence belongs to the NAD(P)-dependent epimerase/dehydratase family. It depends on NAD(+) as a cofactor.

The enzyme catalyses UDP-alpha-D-glucose = UDP-alpha-D-galactose. Its pathway is carbohydrate metabolism; galactose metabolism. Catalyzes the interconversion between UDP-glucose and UDP-galactose. In Oryza sativa subsp. japonica (Rice), this protein is UDP-glucose 4-epimerase 1 (UGE-1).